A 543-amino-acid chain; its full sequence is Headcase protein homolog (543 aa).

Disordered regions lie at residues 1-26 (MPNPKNSKGGRKNKRANSSGDEQENG) and 197-283 (MQDE…LSPA). Basic and acidic residues-rich tracts occupy residues 197–211 (MQDEKKKKSGSEKNT) and 235–250 (PSHDLPRRHSMDRQNS). Ser264 and Ser268 each carry phosphoserine.

As to expression, expressed in all tissues examined. Highest levels are in the spleen, thymus, peripheral blood and heart. Lowest in the kidney and pancreas.

Its function is as follows. May play an important role in some human cancers. May be part of the regulatory mechanism in the development of epithelial tube networks such as the circulatory system and lungs. This is Headcase protein homolog (HECA) from Homo sapiens (Human).